The following is a 160-amino-acid chain: SsrA-binding protein (160 aa).

Belongs to the SmpB family.

Its subcellular location is the cytoplasm. In terms of biological role, required for rescue of stalled ribosomes mediated by trans-translation. Binds to transfer-messenger RNA (tmRNA), required for stable association of tmRNA with ribosomes. tmRNA and SmpB together mimic tRNA shape, replacing the anticodon stem-loop with SmpB. tmRNA is encoded by the ssrA gene; the 2 termini fold to resemble tRNA(Ala) and it encodes a 'tag peptide', a short internal open reading frame. During trans-translation Ala-aminoacylated tmRNA acts like a tRNA, entering the A-site of stalled ribosomes, displacing the stalled mRNA. The ribosome then switches to translate the ORF on the tmRNA; the nascent peptide is terminated with the 'tag peptide' encoded by the tmRNA and targeted for degradation. The ribosome is freed to recommence translation, which seems to be the essential function of trans-translation. The sequence is that of SsrA-binding protein from Salmonella arizonae (strain ATCC BAA-731 / CDC346-86 / RSK2980).